We begin with the raw amino-acid sequence, 325 residues long: Phenylalanine--tRNA ligase alpha subunit (325 aa).

Mg(2+) is bound at residue glutamate 251.

The protein belongs to the class-II aminoacyl-tRNA synthetase family. Phe-tRNA synthetase alpha subunit type 1 subfamily. In terms of assembly, tetramer of two alpha and two beta subunits. The cofactor is Mg(2+).

It is found in the cytoplasm. It carries out the reaction tRNA(Phe) + L-phenylalanine + ATP = L-phenylalanyl-tRNA(Phe) + AMP + diphosphate + H(+). The protein is Phenylalanine--tRNA ligase alpha subunit of Thermotoga petrophila (strain ATCC BAA-488 / DSM 13995 / JCM 10881 / RKU-1).